The chain runs to 445 residues: ATP-dependent protease ATPase subunit HslU (445 aa).

Residues isoleucine 17, 59 to 64, aspartate 254, glutamate 319, and arginine 391 each bind ATP; that span reads GVGKTE.

The protein belongs to the ClpX chaperone family. HslU subfamily. As to quaternary structure, a double ring-shaped homohexamer of HslV is capped on each side by a ring-shaped HslU homohexamer. The assembly of the HslU/HslV complex is dependent on binding of ATP.

It localises to the cytoplasm. Its function is as follows. ATPase subunit of a proteasome-like degradation complex; this subunit has chaperone activity. The binding of ATP and its subsequent hydrolysis by HslU are essential for unfolding of protein substrates subsequently hydrolyzed by HslV. HslU recognizes the N-terminal part of its protein substrates and unfolds these before they are guided to HslV for hydrolysis. The chain is ATP-dependent protease ATPase subunit HslU from Pseudomonas fluorescens (strain Pf0-1).